Consider the following 373-residue polypeptide: 3 beta-hydroxysteroid dehydrogenase/Delta 5--&gt;4-isomerase type 2 (373 aa).

The active-site Proton acceptor is the Y155. K159 contributes to the NAD(+) binding site. The helical transmembrane segment at 288-308 threads the bilayer; it reads VALLYWLGFLLELVNFLLRPV.

This sequence belongs to the 3-beta-HSD family. In terms of tissue distribution, high levels in adrenal gland, kidney and male liver. Low levels in female liver.

The protein localises to the endoplasmic reticulum membrane. It is found in the mitochondrion membrane. The enzyme catalyses a 3beta-hydroxy-Delta(5)-steroid + NAD(+) = a 3-oxo-Delta(5)-steroid + NADH + H(+). The catalysed reaction is a 3-oxo-Delta(5)-steroid = a 3-oxo-Delta(4)-steroid. It catalyses the reaction pregnenolone + NAD(+) = pregn-5-ene-3,20-dione + NADH + H(+). It carries out the reaction pregn-5-ene-3,20-dione = progesterone. The enzyme catalyses 3beta-hydroxyandrost-5-en-17-one + NAD(+) = androst-5-ene-3,17-dione + NADH + H(+). The catalysed reaction is androst-5-ene-3,17-dione = androst-4-ene-3,17-dione. It participates in lipid metabolism; steroid biosynthesis. In terms of biological role, 3-beta-HSD is a bifunctional enzyme, that catalyzes the oxidative conversion of Delta(5)-ene-3-beta-hydroxy steroid, and the oxidative conversion of ketosteroids. The 3-beta-HSD enzymatic system plays a crucial role in the biosynthesis of all classes of hormonal steroids. The sequence is that of 3 beta-hydroxysteroid dehydrogenase/Delta 5--&gt;4-isomerase type 2 (HSD3B2) from Mesocricetus auratus (Golden hamster).